Here is a 201-residue protein sequence, read N- to C-terminus: Small ribosomal subunit protein uS4 (201 aa).

The tract at residues 1-42 (MARYTGPVTRKSRRLGTDLVGGDQSFEKRPYPPGQHGRARIK) is disordered. In terms of domain architecture, S4 RNA-binding spans 91–157 (SRLDNVVYRA…VPFQIARETA (67 aa)).

It belongs to the universal ribosomal protein uS4 family. Part of the 30S ribosomal subunit. Contacts protein S5. The interaction surface between S4 and S5 is involved in control of translational fidelity.

One of the primary rRNA binding proteins, it binds directly to 16S rRNA where it nucleates assembly of the body of the 30S subunit. Its function is as follows. With S5 and S12 plays an important role in translational accuracy. The polypeptide is Small ribosomal subunit protein uS4 (Mycobacterium ulcerans (strain Agy99)).